The chain runs to 491 residues: Probable aspartyl aminopeptidase (491 aa).

His-90 serves as a coordination point for Zn(2+). His-168 contacts substrate. Asp-278 is a Zn(2+) binding site. Glu-315 contacts substrate. Positions 316 and 361 each coordinate Zn(2+). Residues Asp-361, His-364, Lys-389, and Tyr-396 each coordinate substrate. Zn(2+) is bound at residue His-455.

This sequence belongs to the peptidase M18 family. In terms of assembly, tetrahedron-shaped homododecamer built from six homodimers. The cofactor is Zn(2+).

It is found in the cytoplasm. The enzyme catalyses Release of an N-terminal aspartate or glutamate from a peptide, with a preference for aspartate.. In terms of biological role, likely to play an important role in intracellular protein and peptide metabolism. This chain is Probable aspartyl aminopeptidase, found in Ricinus communis (Castor bean).